Consider the following 1569-residue polypeptide: Zinc finger protein GLI3 (1569 aa).

Polar residues-rich tracts occupy residues 1 to 10 and 416 to 432; these read MEAQSRSTTA and AAQQNKPTSESAVSSTG. Disordered stretches follow at residues 1 to 79 and 414 to 461; these read MEAQ…STSS and SEAA…DQPD. 5 C2H2-type zinc fingers span residues 485 to 510, 518 to 545, 551 to 575, 581 to 606, and 612 to 637; these read TNCHWEGCSREFDTQEQLVHHINNDH, FVCRWLDCSREQKPFKAQYMLVVHMRRH, HKCTFEGCSKAYSRLENLKTHLRSH, YVCEHEGCNKAFSNASDRAKHQNRTH, and YVCKIPGCTKRYTDPSSLRKHVKTVH. Disordered regions lie at residues 625 to 731, 899 to 921, 1202 to 1228, and 1335 to 1364; these read DPSS…YTNS, SYDPISTDASRRSSETSQCDGLP, PKSGLSQQRGYQHHTQNNPQAPQQNLD, and SNQTTSGQNGNTTDGTRSFLSTTQNGGEQQ. Residues 637 to 653 are compositionally biased toward basic and acidic residues; the sequence is HGPEAHVTKKQRGDIHP. Residues 663-676 are compositionally biased toward polar residues; the sequence is SHSQSRSPGQQTQG. The segment covering 678–704 has biased composition (basic and acidic residues); the sequence is HGEHKDLSNTTSKHEECLQVRSVKTEK. Residues 705–731 show a composition bias toward polar residues; it reads PMSSQPSPGGKSSCSRQQSPISNYTNS. Residues 1335-1350 are compositionally biased toward low complexity; that stretch reads SNQTTSGQNGNTTDGT. Residues 1352-1364 are compositionally biased toward polar residues; the sequence is SFLSTTQNGGEQQ.

The protein belongs to the GLI C2H2-type zinc-finger protein family. In terms of processing, phosphorylation is essential for its proteolytic processing. Post-translationally, the repressor form (GLI3R), a C-terminally truncated form is generated from the full-length GLI3 protein (GLI3FL) through proteolytic processing.

It is found in the nucleus. The protein resides in the cytoplasm. Its function is as follows. Has a dual function as a transcriptional activator and a repressor of the sonic hedgehog (Shh) pathway, and may play a role in limb development. May bind to the minimal GLI-consensus sequence 5'-GGGTGGTC-3'. Has an essential role in the early embryonic patterning of mesoderm and neuroectoderm. This Xenopus laevis (African clawed frog) protein is Zinc finger protein GLI3 (gli3).